Here is a 724-residue protein sequence, read N- to C-terminus: 1,4-alpha-glucan branching enzyme GlgB 1 (724 aa).

Residue aspartate 403 is the Nucleophile of the active site. The active-site Proton donor is glutamate 456.

Belongs to the glycosyl hydrolase 13 family. GlgB subfamily. Monomer.

It carries out the reaction Transfers a segment of a (1-&gt;4)-alpha-D-glucan chain to a primary hydroxy group in a similar glucan chain.. It functions in the pathway glycan biosynthesis; glycogen biosynthesis. Catalyzes the formation of the alpha-1,6-glucosidic linkages in glycogen by scission of a 1,4-alpha-linked oligosaccharide from growing alpha-1,4-glucan chains and the subsequent attachment of the oligosaccharide to the alpha-1,6 position. The polypeptide is 1,4-alpha-glucan branching enzyme GlgB 1 (Xanthomonas campestris pv. campestris (strain 8004)).